Consider the following 395-residue polypeptide: MGKEKFDRSKPHVNVGTIGHVDHGKTTLTAAISAVLSKAQGKAATKFDQIDGAPEERERGITIATAHIEYETDKRHYAHVDCPGHADYVKNMITGAAQMDGAILVVSATDGPMPQTREHILLSRQVGVPYIVVFMNKVDMVDDEELLELVEMEIRELLSEYDFPGDDLPVIKGSALGALNGEAQWEEKVMELMNAVDEYIPEPVRDTEKDFMMPVEDVFSITGRGTVATGRVERGVLRVNDEIEIVGLTEETKKTVCTGVEMFRKLLDYAEAGDNIGALLRGVSRDDIERGQVLAKPGSITPHSKFKASIYVLSKEEGGRHTPFFANYRPQFYFRTTDVTGIVHLPEGTEMVMPGDNIELTIELISTIAIEDGTRFSIREGGRTVGAGSVTEIIE.

Residues 10-204 (KPHVNVGTIG…AVDEYIPEPV (195 aa)) enclose the tr-type G domain. Positions 19-26 (GHVDHGKT) are G1. 19–26 (GHVDHGKT) lines the GTP pocket. Thr26 contacts Mg(2+). Residues 60-64 (GITIA) are G2. Positions 81 to 84 (DCPG) are G3. Residues 81-85 (DCPGH) and 136-139 (NKVD) contribute to the GTP site. The interval 136–139 (NKVD) is G4. The interval 174-176 (SAL) is G5.

This sequence belongs to the TRAFAC class translation factor GTPase superfamily. Classic translation factor GTPase family. EF-Tu/EF-1A subfamily. In terms of assembly, monomer.

It is found in the cytoplasm. It catalyses the reaction GTP + H2O = GDP + phosphate + H(+). GTP hydrolase that promotes the GTP-dependent binding of aminoacyl-tRNA to the A-site of ribosomes during protein biosynthesis. This Exiguobacterium sp. (strain ATCC BAA-1283 / AT1b) protein is Elongation factor Tu.